Reading from the N-terminus, the 656-residue chain is MMATPATDLISDNDKYNKQCLSDSSDSGSDVSFFSVNESEGELDTMEKVDTLIGGARVISNKVEKDSDSEQRGRKKETTGPNNYHNLEEKQASAISLDADDEDLDEIISYSHDGNYDSSHKTFSFSLPFGNTNFRSSSPLAIIKTVLPKTPDEFIKKNLRKNEIKQKLKKSTSISSLEEIELFKYERGIDNSRLRAVKESLEMDALKNSIKQITADPFDKTHDGYYRSRLESIWNELEGDVVIMGGYRGSVLRDATTHKRIWIPLKAGLNMTKVDLLIGPNDEDELKTQKEIVPDGMLTHIGPVDISKRLIKRLDANPNLNVQQFGYDWRLSLDISAKHLTTKLEEIYNKQKNKKGIYIIAHSMGGLVAHKVLQDCTHLIRGIIYVGSPSQCPNILGPIRFGDDVMWNKTIFTKETNFFMRSSFYFLPLDGRCFVDKITLERYDFDFFDTDVWKTLGLSPLVNEKREESAHEKSKLLPRKTKSALSLKATLNATTKFVLNAPVVRNVAGNNKQVPRDVPFDEVFHTSYEDSCEYLARTLKRTKNYLDSLDYDPNKEYPPLAMVYGNKVPTVRGAKVNGIQDIKDGNYEDFYYGPGDGVVHHKWLLPEQRGFPVVCKIASSSGHVSLMTDLKSMAKAFISIVDSEKEGRRSRTRTSS.

2 disordered regions span residues 1–41 (MMAT…ESEG) and 60–88 (SNKV…HNLE). Positions 22-36 (SDSSDSGSDVSFFSV) are enriched in low complexity. Ser-39 carries the post-translational modification Phosphoserine. The segment covering 62 to 78 (KVEKDSDSEQRGRKKET) has biased composition (basic and acidic residues).

Its subcellular location is the cytoplasm. It localises to the mitochondrion. This is an uncharacterized protein from Saccharomyces cerevisiae (strain ATCC 204508 / S288c) (Baker's yeast).